The primary structure comprises 351 residues: sn-glycerol-3-phosphate import ATP-binding protein UgpC (351 aa).

Positions 4-235 (IVLDNVRKSY…PASTFVATFI (232 aa)) constitute an ABC transporter domain. ATP is bound at residue 37–44 (GPSGCGKS).

The protein belongs to the ABC transporter superfamily. sn-glycerol-3-phosphate importer (TC 3.A.1.1.3) family. As to quaternary structure, the complex is composed of two ATP-binding proteins (UgpC), two transmembrane proteins (UgpA and UgpE) and a solute-binding protein (UgpB).

The protein resides in the cell inner membrane. It carries out the reaction sn-glycerol 3-phosphate(out) + ATP + H2O = sn-glycerol 3-phosphate(in) + ADP + phosphate + H(+). In terms of biological role, part of the ABC transporter complex UgpBAEC involved in sn-glycerol-3-phosphate (G3P) import. Responsible for energy coupling to the transport system. The polypeptide is sn-glycerol-3-phosphate import ATP-binding protein UgpC (Brucella abortus biovar 1 (strain 9-941)).